Consider the following 516-residue polypeptide: Golgi-associated kinase 1B (516 aa).

At 1–37 the chain is on the cytoplasmic side; it reads MTCPDKLGQLINWFVCSLCAPRVCKLWSSRRPRTRRN. A helical; Signal-anchor for type II membrane protein transmembrane segment spans residues 38 to 55; the sequence is LLLGTACAIYLGFLVSQV. The Extracellular segment spans residues 56–516; sequence GKGSFQHGQA…HGARVLPMNE (461 aa). A glycan (N-linked (GlcNAc...) asparagine) is linked at N286.

It belongs to the GASK family.

Its subcellular location is the golgi apparatus membrane. This Rattus norvegicus (Rat) protein is Golgi-associated kinase 1B.